A 316-amino-acid chain; its full sequence is DNA-directed RNA polymerase III subunit RPC6 (316 aa).

The residue at position 2 (A2) is an N-acetylalanine. Glycyl lysine isopeptide (Lys-Gly) (interchain with G-Cter in SUMO2) cross-links involve residues K5 and K7. Residues C287, C290, C296, and C307 each contribute to the [4Fe-4S] cluster site.

It belongs to the eukaryotic RPC34/RPC39 RNA polymerase subunit family. As to quaternary structure, component of the RNA polymerase III complex consisting of 17 subunits: a ten-subunit horseshoe-shaped catalytic core composed of POLR3A/RPC1, POLR3B/RPC2, POLR1C/RPAC1, POLR1D/RPAC2, POLR3K/RPC10, POLR2E/RPABC1, POLR2F/RPABC2, POLR2H/RPABC3, POLR2K/RPABC4 and POLR2L/RPABC5; a mobile stalk composed of two subunits POLR3H/RPC8 and CRCP/RPC9, protruding from the core and functioning primarily in transcription initiation; and additional subunits homologous to general transcription factors of the RNA polymerase II machinery, POLR3C/RPC3-POLR3F/RPC6-POLR3G/RPC7 heterotrimer required for transcription initiation and POLR3D/RPC4-POLR3E/RPC5 heterodimer involved in both transcription initiation and termination. Directly interacts with POLR3C. Interacts with TBP and TFIIIB90 and GTF3C4. Interacts with MAF1. As part of the RNA polymerase III complex, interacts with PKP2.

The protein resides in the nucleus. DNA-dependent RNA polymerase catalyzes the transcription of DNA into RNA using the four ribonucleoside triphosphates as substrates. Specific peripheric component of RNA polymerase III (Pol III) which synthesizes small non-coding RNAs including 5S rRNA, snRNAs, tRNAs and miRNAs from at least 500 distinct genomic loci. Part of POLR3C/RPC3-POLR3F/RPC6-POLR3G/RPC7 heterotrimer that coordinates the dynamics of Pol III stalk and clamp modules during the transition from apo to elongation state. Pol III plays a key role in sensing and limiting infection by intracellular bacteria and DNA viruses, including varicella zoster virus. Acts as a nuclear and cytosolic DNA sensor detecting AT-rich DNA, involved in innate immune response. Can sense non-self dsDNA that serves as template for transcription into dsRNA. The non-self RNA polymerase III transcripts, such as Epstein-Barr virus-encoded RNAs (EBERs) induce type I interferon and NF-kappa-B through the RIG-I pathway. Preferentially binds double-stranded DNA (dsDNA). This Mus musculus (Mouse) protein is DNA-directed RNA polymerase III subunit RPC6.